Here is a 416-residue protein sequence, read N- to C-terminus: Transmembrane protease serine 11B (416 aa).

The Cytoplasmic portion of the chain corresponds to 1-17 (MYRHGISSQRSWPLWTT). Residues 18–38 (IFIFLGVAAILGVTIGLLVHF) traverse the membrane as a helical; Signal-anchor for type II membrane protein segment. At 39–416 (LAVEKTYYYQ…RNWITSKTGL (378 aa)) the chain is on the extracellular side. Residues 43–160 (KTYYYQGDFH…ASIKLMEISK (118 aa)) enclose the SEA domain. 2 N-linked (GlcNAc...) asparagine glycosylation sites follow: Asn-72 and Asn-107. One can recognise a Peptidase S1 domain in the interval 185–415 (IVNGKSSLEG…YRNWITSKTG (231 aa)). A disulfide bond links Cys-210 and Cys-226. Residues His-225 and Asp-270 each act as charge relay system in the active site. Asn-315 carries N-linked (GlcNAc...) asparagine glycosylation. 2 cysteine pairs are disulfide-bonded: Cys-335-Cys-351 and Cys-362-Cys-391. Residue Ser-366 is the Charge relay system of the active site.

This sequence belongs to the peptidase S1 family.

The protein resides in the cell membrane. Its activity is regulated as follows. Inhibited by aprotinin, leupeptin, benzamidine, SERPINA1, SPINT1 and SPINT2. In terms of biological role, serine protease. The polypeptide is Transmembrane protease serine 11B (TMPRSS11B) (Homo sapiens (Human)).